We begin with the raw amino-acid sequence, 44 residues long: Unknown protein 9 (44 aa).

The protein is Unknown protein 9 of Pseudotsuga menziesii (Douglas-fir).